The following is a 220-amino-acid chain: Probable cytidylate kinase (220 aa).

ATP is bound at residue 10–18; that stretch reads GPAASGKSS.

Belongs to the cytidylate kinase family. Type 1 subfamily.

The enzyme catalyses CMP + ATP = CDP + ADP. The catalysed reaction is dCMP + ATP = dCDP + ADP. The polypeptide is Probable cytidylate kinase (Encephalitozoon cuniculi (strain GB-M1) (Microsporidian parasite)).